A 131-amino-acid polypeptide reads, in one-letter code: Small ribosomal subunit protein uS8 (131 aa).

It belongs to the universal ribosomal protein uS8 family. Part of the 30S ribosomal subunit. Contacts proteins S5 and S12.

Functionally, one of the primary rRNA binding proteins, it binds directly to 16S rRNA central domain where it helps coordinate assembly of the platform of the 30S subunit. This Campylobacter fetus subsp. fetus (strain 82-40) protein is Small ribosomal subunit protein uS8.